We begin with the raw amino-acid sequence, 379 residues long: MSATLRRLILLTSTNRSRNLSPPFLSTAVNHLSLSFSSVSSSPESHTSPSRIRTRTPLETQFETWIQNLKPGFTNSDVVIALRAQSDPDLALDIFRWTAQQRGYKHNHEAYHTMIKQAITGKRNNFVETLIEEVIAGACEMSVPLYNCIIRFCCGRKFLFNRAFDVYNKMLRSDDSKPDLETYTLLLSSLLKRFNKLNVCYVYLHAVRSLTKQMKSNGVIPDTFVLNMIIKAYAKCLEVDEAIRVFKEMALYGSEPNAYTYSYLVKGVCEKGRVGQGLGFYKEMQVKGMVPNGSCYMVLICSLSMERRLDEAVEVVYDMLANSLSPDMLTYNTVLTELCRGGRGSEALEMVEEWKKRDPVMGERNYRTLMDEVYFLNKG.

6 PPR repeats span residues 142 to 177 (SVPL…DDSK), 179 to 221 (DLET…GVIP), 222 to 256 (DTFV…GSEP), 257 to 291 (NAYT…GMVP), 292 to 326 (NGSC…SLSP), and 327 to 361 (DMLT…DPVM).

The protein belongs to the PPR family. P subfamily.

The protein localises to the mitochondrion. This is Pentatricopeptide repeat-containing protein At3g25210, mitochondrial from Arabidopsis thaliana (Mouse-ear cress).